Here is a 134-residue protein sequence, read N- to C-terminus: Lymphocyte antigen 6I (134 aa).

An N-terminal signal peptide occupies residues 1–21; the sequence is MDTSHAIKSCVLILLVTLLCA. The region spanning 27–105 is the UPAR/Ly6 domain; the sequence is LECYQCYGVP…ISCCQEDLCN (79 aa). Cystine bridges form between Cys-29-Cys-53, Cys-32-Cys-41, Cys-46-Cys-74, Cys-78-Cys-98, and Cys-99-Cys-104. An N-linked (GlcNAc...) asparagine glycan is attached at Asn-95. A lipid anchor (GPI-anchor amidated glycine) is attached at Gly-112. Residues 113 to 134 constitute a propeptide, removed in mature form; that stretch reads SSWTTAGVLLFSLGSVLLQTLM.

In terms of tissue distribution, expressed in hematopoietic tissue (spleen, thymus, bone marrow). Also found in peritoneal macrophages, peripheral blood leukocytes, liver, heart, brain, kidney and lung.

The protein resides in the cell membrane. This chain is Lymphocyte antigen 6I (Ly6i), found in Mus musculus (Mouse).